A 298-amino-acid chain; its full sequence is uncharacterized protein (298 aa).

Catalysis depends on charge relay system residues threonine 43 and tyrosine 105. Tyrosine 131 acts as the Proton donor in catalysis. Residue lysine 159 is the Schiff-base intermediate with substrate of the active site.

This sequence belongs to the DapA family. Homotetramer.

It is found in the cytoplasm. This is an uncharacterized protein from Pyrococcus furiosus (strain ATCC 43587 / DSM 3638 / JCM 8422 / Vc1).